A 439-amino-acid chain; its full sequence is D-inositol 3-phosphate glycosyltransferase (439 aa).

His21 provides a ligand contact to 1D-myo-inositol 3-phosphate. UDP-N-acetyl-alpha-D-glucosamine contacts are provided by residues Gln27–Pro28 and Gly35. 1D-myo-inositol 3-phosphate contacts are provided by residues Asp32 to Asn37, Lys90, Tyr123, Thr147, and Arg167. 3 residues coordinate UDP-N-acetyl-alpha-D-glucosamine: Arg241, Lys246, and Gln299. Mg(2+) is bound by residues Tyr308, Arg309, and Ala311. 2 residues coordinate UDP-N-acetyl-alpha-D-glucosamine: Glu321 and Glu329. Thr335 contacts Mg(2+).

It belongs to the glycosyltransferase group 1 family. MshA subfamily. In terms of assembly, homodimer.

The catalysed reaction is 1D-myo-inositol 3-phosphate + UDP-N-acetyl-alpha-D-glucosamine = 1D-myo-inositol 2-acetamido-2-deoxy-alpha-D-glucopyranoside 3-phosphate + UDP + H(+). Functionally, catalyzes the transfer of a N-acetyl-glucosamine moiety to 1D-myo-inositol 3-phosphate to produce 1D-myo-inositol 2-acetamido-2-deoxy-glucopyranoside 3-phosphate in the mycothiol biosynthesis pathway. This Mycobacterium sp. (strain KMS) protein is D-inositol 3-phosphate glycosyltransferase.